The chain runs to 324 residues: bZIP transcription factor 46 (324 aa).

The disordered stretch occupies residues 106 to 127 (LGGSDDEDPAAAAAAAAPAQRQ). Over residues 115–124 (AAAAAAAAPA) the composition is skewed to low complexity. The region spanning 242–287 (VERRQRRMIKNRESAARSRARKQAYIMELEAEVAKLKEQKAELQKK) is the bZIP domain. Residues 244-263 (RRQRRMIKNRESAARSRARK) form a basic motif region. Residues 270–284 (LEAEVAKLKEQKAEL) are leucine-zipper.

Interacts with MODD. Interacts with SAPK2, SAPK6 and SAPK9. Post-translationally, phosphorylated on serine and threonine residues by SAPK2, SAPK6 and SAPK9. Phosphorylation is required for full transactivation activity. In terms of tissue distribution, expressed in roots, shoots, leaves, flag leaves, stems, flowers and panicles. Widely expressed.

The protein resides in the nucleus. Its function is as follows. Transcription factor involved in abscisic acid (ABA) signaling pathway. Transcription factor activity is fully activated by ABA. Acts as a positive regulator of the expression of abiotic stress-responsive genes through an ABA-dependent signaling pathway. Acts as a positive regulator of ABA signaling and drought stress tolerance. Plays an important role in ABA and auxin responses. Involved in ABA signaling and stress responses by directly binding to the ABA-responsive element (ABRE)-containing genes, especially WRKY family genes. Modulates response to auxin. Suppresses auxin signaling by targeting ABRE-containing genes related to auxin metabolism or signaling. This Oryza sativa subsp. japonica (Rice) protein is bZIP transcription factor 46.